Reading from the N-terminus, the 193-residue chain is dTTP/UTP pyrophosphatase (193 aa).

Catalysis depends on D71, which acts as the Proton acceptor.

It belongs to the Maf family. YhdE subfamily. Requires a divalent metal cation as cofactor.

Its subcellular location is the cytoplasm. The catalysed reaction is dTTP + H2O = dTMP + diphosphate + H(+). It catalyses the reaction UTP + H2O = UMP + diphosphate + H(+). Nucleoside triphosphate pyrophosphatase that hydrolyzes dTTP and UTP. May have a dual role in cell division arrest and in preventing the incorporation of modified nucleotides into cellular nucleic acids. The polypeptide is dTTP/UTP pyrophosphatase (Citrifermentans bemidjiense (strain ATCC BAA-1014 / DSM 16622 / JCM 12645 / Bem) (Geobacter bemidjiensis)).